Reading from the N-terminus, the 197-residue chain is Imidazoleglycerol-phosphate dehydratase (197 aa).

It belongs to the imidazoleglycerol-phosphate dehydratase family.

The protein resides in the cytoplasm. The enzyme catalyses D-erythro-1-(imidazol-4-yl)glycerol 3-phosphate = 3-(imidazol-4-yl)-2-oxopropyl phosphate + H2O. It functions in the pathway amino-acid biosynthesis; L-histidine biosynthesis; L-histidine from 5-phospho-alpha-D-ribose 1-diphosphate: step 6/9. This chain is Imidazoleglycerol-phosphate dehydratase, found in Rhodopseudomonas palustris (strain ATCC BAA-98 / CGA009).